The sequence spans 1080 residues: AP-4 complex subunit epsilon (1080 aa).

HEAT repeat units follow at residues 161–198 (DTIP…LVGD), 201–238 (LDDD…KHST), 369–405 (QLIE…KVSP), 406–443 (KLVL…QTNV), and 445–479 (PVCS…KYSP). 4 disordered regions span residues 711–782 (TPLV…FPQQ), 801–920 (NNNS…NIDP), 933–973 (FSEN…INNN), and 996–1027 (TNNS…NNNL). Low complexity-rich tracts occupy residues 762–782 (QQQQ…FPQQ), 801–847 (NNNS…PNNQ), 878–911 (NKQT…IQKH), 936–952 (NNNR…NQNN), and 962–972 (KKSNNENNINN).

Belongs to the adaptor complexes large subunit family. May be part of the adaptor protein complex 4 (AP-4), a heterotetramer composed of two large adaptins (epsilon-type subunitand beta-type subunit), a medium adaptin (mu-type subunit) and a small adaptin (sigma-type).

It is found in the golgi apparatus. It localises to the trans-Golgi network membrane. Its function is as follows. Probable component of an adaptor protein complex. Adaptor protein complexes are vesicle coat components involved both in vesicle formation and cargo selection. They control the vesicular transport of proteins in different trafficking pathways. This chain is AP-4 complex subunit epsilon, found in Dictyostelium discoideum (Social amoeba).